The chain runs to 685 residues: Allergen Cr-PI (685 aa).

Positions 1–16 are cleaved as a signal peptide; the sequence is MKTALVFAAVVAFVAA. Asn233 is a glycosylation site (N-linked (GlcNAc...) asparagine).

Belongs to the hemocyanin family.

It is found in the secreted. The protein resides in the extracellular space. Larval storage protein (LSP) which may serve as a store of amino acids for synthesis of adult proteins. The polypeptide is Allergen Cr-PI (Periplaneta americana (American cockroach)).